Reading from the N-terminus, the 918-residue chain is Glutamate receptor ionotropic, kainate 1 (918 aa).

An N-terminal signal peptide occupies residues 1 to 30 (MELGTLLAQPGLWTRDTSWALLYFLCYILP). Residues 31–576 (QTAPQVLRIG…VFSFLNPLSP (546 aa)) lie on the Extracellular side of the membrane. N-linked (GlcNAc...) asparagine glycosylation is found at Asn68, Asn74, Asn276, Asn379, Asn428, Asn439, and Asn446. The L-glutamate site is built by Pro531, Thr533, and Arg538. Asn561 carries an N-linked (GlcNAc...) asparagine glycan. Residues 577–597 (DIWMYVLLACLGVSCVLFVIA) form a helical membrane-spanning segment. The Cytoplasmic portion of the chain corresponds to 598-653 (RFTPYEWYNPHPCNPDSDVVENNFTLLNSFWFGVGALMQQGSELMPKALSTRIVGG). The chain crosses the membrane as a helical span at residues 654-674 (IWWFFTLIIISSYTANLAAFL). The Extracellular portion of the chain corresponds to 675–834 (TVERMESPID…KEASALGVEN (160 aa)). L-glutamate contacts are provided by Ser704 and Thr705. The residue at position 725 (Ser725) is a Phosphoserine; by PKC. Glu753 is an L-glutamate binding site. Thr761 carries the post-translational modification Phosphothreonine; by PKC. An intrachain disulfide couples Cys765 to Cys819. Asn766 is a glycosylation site (N-linked (GlcNAc...) asparagine). A helical transmembrane segment spans residues 835 to 855 (IGGIFIVLAAGLVLSVFVAIG). The Cytoplasmic segment spans residues 856–918 (EFIYKSRKNN…IRKQSSVHTV (63 aa)).

The protein belongs to the glutamate-gated ion channel (TC 1.A.10.1) family. GRIK1 subfamily. In terms of assembly, homotetramer or heterotetramer of pore-forming glutamate receptor subunits. Tetramers may be formed by the dimerization of dimers. Can form functional heteromeric receptors with GRIK4 and GRIK5. Interacts with KLHL17.

Its subcellular location is the cell membrane. It is found in the postsynaptic cell membrane. It catalyses the reaction Ca(2+)(in) = Ca(2+)(out). Its function is as follows. Ionotropic glutamate receptor that functions as a cation-permeable ligand-gated ion channel, gated by L-glutamate and the glutamatergic agonist kainic acid. L-glutamate acts as an excitatory neurotransmitter at many synapses in the central nervous system. Binding of the excitatory neurotransmitter L-glutamate induces a conformation change, leading to the opening of the cation channel, and thereby converts the chemical signal to an electrical impulse. The receptor then desensitizes rapidly and enters a transient inactive state, characterized by the presence of bound agonist. In Macaca fascicularis (Crab-eating macaque), this protein is Glutamate receptor ionotropic, kainate 1 (GRIK1).